Reading from the N-terminus, the 273-residue chain is GATA-type zinc finger protein 1 (273 aa).

Disordered regions lie at residues 99-143 (RDSK…ERVD) and 172-201 (SSRS…AGSE). A GATA-type zinc finger spans residues 208–232 (CASCRTQRTPLWRDAEDGTPLCNAC).

The protein resides in the nucleus. Its function is as follows. Transcriptional regulator that plays a key role in germ cell development. Determines the oogenic fate by activating key genes for the oogenic program and meiotic prophase entry. Acts downstream of bone morphogenetic protein (BMP) by regulating expression of genes required for the oogenic programs, which are repressed by Polycomb activities in sexually uncommitted germ cells. Regulates expression of STRA8, a central downstream effector for the meiotic program. Acts independently of retinoic acid (RA). In males, not required for germ-cell sex determination, but required to allow the spermatogonia to efficiently accomplish the meiotic prophase. The polypeptide is GATA-type zinc finger protein 1 (Homo sapiens (Human)).